Reading from the N-terminus, the 77-residue chain is Acyl carrier protein (77 aa).

Residues 2–77 (AEVFDRVKEI…DAVDYINSKA (76 aa)) form the Carrier domain. Residue S37 is modified to O-(pantetheine 4'-phosphoryl)serine.

This sequence belongs to the acyl carrier protein (ACP) family. 4'-phosphopantetheine is transferred from CoA to a specific serine of apo-ACP by AcpS. This modification is essential for activity because fatty acids are bound in thioester linkage to the sulfhydryl of the prosthetic group.

Its subcellular location is the cytoplasm. The protein operates within lipid metabolism; fatty acid biosynthesis. Its function is as follows. Carrier of the growing fatty acid chain in fatty acid biosynthesis. This chain is Acyl carrier protein, found in Oceanobacillus iheyensis (strain DSM 14371 / CIP 107618 / JCM 11309 / KCTC 3954 / HTE831).